Reading from the N-terminus, the 314-residue chain is tRNA dimethylallyltransferase 2 (314 aa).

8 to 15 (GPTGSGKS) is an ATP binding site. 10–15 (TGSGKS) lines the substrate pocket.

This sequence belongs to the IPP transferase family. As to quaternary structure, monomer. The cofactor is Mg(2+).

It catalyses the reaction adenosine(37) in tRNA + dimethylallyl diphosphate = N(6)-dimethylallyladenosine(37) in tRNA + diphosphate. Functionally, catalyzes the transfer of a dimethylallyl group onto the adenine at position 37 in tRNAs that read codons beginning with uridine, leading to the formation of N6-(dimethylallyl)adenosine (i(6)A). This chain is tRNA dimethylallyltransferase 2, found in Mycobacterium marinum (strain ATCC BAA-535 / M).